Consider the following 171-residue polypeptide: S-ribosylhomocysteine lyase (171 aa).

The Fe cation site is built by H54, H58, and C128.

This sequence belongs to the LuxS family. Homodimer. Fe cation is required as a cofactor.

It carries out the reaction S-(5-deoxy-D-ribos-5-yl)-L-homocysteine = (S)-4,5-dihydroxypentane-2,3-dione + L-homocysteine. In terms of biological role, involved in the synthesis of autoinducer 2 (AI-2) which is secreted by bacteria and is used to communicate both the cell density and the metabolic potential of the environment. The regulation of gene expression in response to changes in cell density is called quorum sensing. Catalyzes the transformation of S-ribosylhomocysteine (RHC) to homocysteine (HC) and 4,5-dihydroxy-2,3-pentadione (DPD). The protein is S-ribosylhomocysteine lyase of Yersinia pseudotuberculosis serotype O:1b (strain IP 31758).